Consider the following 67-residue polypeptide: Peptide Hp1239 (67 aa).

Residues 1-23 (MKTQFTVLLITLVLFQMLSQSEA) form the signal peptide. Phenylalanine amide is present on F36. The propeptide occupies 40 to 67 (GLSDLSDLDELFDGEITKADLDLLREIM).

Belongs to the non-disulfide-bridged peptide (NDBP) superfamily. Short antimicrobial peptide (group 4) family. In terms of tissue distribution, expressed by the venom gland.

Its subcellular location is the secreted. It is found in the target cell membrane. In terms of biological role, amphipathic peptide with antibacterial activities. Shows antiviral activities against the herpes simplex virus type-1. It potently inhibits the initial infection by provoking the rupture of viral envelop and the dissociation of proteins from the virions (EC(50) is 0.41 uM). It also effectively inhibits viral attachment (EC(50) is 5.73 uM), viral entry (EC(50) is 4.32 uM) and viral proliferation after infection (EC(50) is 8.41 uM). Morever, it enters mammalian tested cells (Vero) and reduces the intracellular infectivity. This Heterometrus petersii (Asian forest scorpion) protein is Peptide Hp1239.